We begin with the raw amino-acid sequence, 238 residues long: Ribosomal RNA small subunit methyltransferase G (238 aa).

S-adenosyl-L-methionine contacts are provided by residues G77, F82, 128-129 (AE), and R147.

The protein belongs to the methyltransferase superfamily. RNA methyltransferase RsmG family.

The protein resides in the cytoplasm. Its function is as follows. Specifically methylates the N7 position of guanine in position 535 of 16S rRNA. The protein is Ribosomal RNA small subunit methyltransferase G of Exiguobacterium sibiricum (strain DSM 17290 / CCUG 55495 / CIP 109462 / JCM 13490 / 255-15).